The chain runs to 353 residues: DNA polymerase IV (353 aa).

The UmuC domain occupies 14-198 (IIHIDMDAFF…MDISKFHGVG (185 aa)). Mg(2+) contacts are provided by Asp18 and Asp116. Glu117 is a catalytic residue.

Belongs to the DNA polymerase type-Y family. In terms of assembly, monomer. Mg(2+) serves as cofactor.

The protein localises to the cytoplasm. It catalyses the reaction DNA(n) + a 2'-deoxyribonucleoside 5'-triphosphate = DNA(n+1) + diphosphate. Poorly processive, error-prone DNA polymerase involved in untargeted mutagenesis. Copies undamaged DNA at stalled replication forks, which arise in vivo from mismatched or misaligned primer ends. These misaligned primers can be extended by PolIV. Exhibits no 3'-5' exonuclease (proofreading) activity. May be involved in translesional synthesis, in conjunction with the beta clamp from PolIII. The chain is DNA polymerase IV from Streptococcus pneumoniae serotype 2 (strain D39 / NCTC 7466).